The chain runs to 133 residues: Ribonuclease P protein component (133 aa).

Belongs to the RnpA family. As to quaternary structure, consists of a catalytic RNA component (M1 or rnpB) and a protein subunit.

It catalyses the reaction Endonucleolytic cleavage of RNA, removing 5'-extranucleotides from tRNA precursor.. Its function is as follows. RNaseP catalyzes the removal of the 5'-leader sequence from pre-tRNA to produce the mature 5'-terminus. It can also cleave other RNA substrates such as 4.5S RNA. The protein component plays an auxiliary but essential role in vivo by binding to the 5'-leader sequence and broadening the substrate specificity of the ribozyme. The polypeptide is Ribonuclease P protein component (Paramagnetospirillum magneticum (strain ATCC 700264 / AMB-1) (Magnetospirillum magneticum)).